A 430-amino-acid polypeptide reads, in one-letter code: Enolase (430 aa).

Gln-163 lines the (2R)-2-phosphoglycerate pocket. Catalysis depends on Glu-205, which acts as the Proton donor. Residues Asp-242, Glu-285, and Asp-312 each coordinate Mg(2+). Residues Lys-337, Arg-366, Ser-367, and Lys-388 each coordinate (2R)-2-phosphoglycerate. Residue Lys-337 is the Proton acceptor of the active site.

Belongs to the enolase family. Requires Mg(2+) as cofactor.

It is found in the cytoplasm. The protein resides in the secreted. The protein localises to the cell surface. The catalysed reaction is (2R)-2-phosphoglycerate = phosphoenolpyruvate + H2O. It participates in carbohydrate degradation; glycolysis; pyruvate from D-glyceraldehyde 3-phosphate: step 4/5. Functionally, catalyzes the reversible conversion of 2-phosphoglycerate (2-PG) into phosphoenolpyruvate (PEP). It is essential for the degradation of carbohydrates via glycolysis. This chain is Enolase, found in Maridesulfovibrio salexigens (strain ATCC 14822 / DSM 2638 / NCIMB 8403 / VKM B-1763) (Desulfovibrio salexigens).